An 84-amino-acid polypeptide reads, in one-letter code: Putative membrane protein insertion efficiency factor (84 aa).

The interval 61-84 (SQGFEDPLPPNTKRTNLTHGRQTK) is disordered. Polar residues predominate over residues 72–84 (TKRTNLTHGRQTK).

It belongs to the UPF0161 family.

The protein resides in the cell inner membrane. In terms of biological role, could be involved in insertion of integral membrane proteins into the membrane. This is Putative membrane protein insertion efficiency factor from Leptospira borgpetersenii serovar Hardjo-bovis (strain JB197).